Here is a 519-residue protein sequence, read N- to C-terminus: AAA-ATPase At4g30250 (519 aa).

The first 24 residues, 1–24 (MSDYWTTMASLLGMLAFCQTIVQL), serve as a signal peptide directing secretion. 252–259 (GPPGTGKS) is a binding site for ATP. Disordered stretches follow at residues 315–335 (GKNK…NGSG) and 467–519 (KSVG…EKEK). Residues 479-488 (QEEEEEAEEE) show a composition bias toward acidic residues. Positions 489–508 (QEKRALDSPNRRNREVCGFR) are enriched in basic and acidic residues. Residues 509–519 (EEEEEEDEKEK) show a composition bias toward acidic residues.

It belongs to the AAA ATPase family. BCS1 subfamily. Mg(2+) serves as cofactor.

It carries out the reaction ATP + H2O = ADP + phosphate + H(+). The chain is AAA-ATPase At4g30250 from Arabidopsis thaliana (Mouse-ear cress).